A 237-amino-acid polypeptide reads, in one-letter code: Exosome complex component Rrp4 (237 aa).

The 73-residue stretch at Gly-72–Lys-144 folds into the S1 motif domain. Positions Pro-152 to Val-211 constitute a KH domain.

This sequence belongs to the RRP4 family. Component of the archaeal exosome complex. Forms a trimer of Rrp4 and/or Csl4 subunits. The trimer associates with a hexameric ring-like arrangement composed of 3 Rrp41-Rrp42 heterodimers.

Its subcellular location is the cytoplasm. Its function is as follows. Non-catalytic component of the exosome, which is a complex involved in RNA degradation. Increases the RNA binding and the efficiency of RNA degradation. Confers strong poly(A) specificity to the exosome. The chain is Exosome complex component Rrp4 from Thermofilum pendens (strain DSM 2475 / Hrk 5).